A 310-amino-acid chain; its full sequence is Ribosomal protein uL3 glutamine methyltransferase (310 aa).

The protein belongs to the protein N5-glutamine methyltransferase family. PrmB subfamily.

The catalysed reaction is L-glutaminyl-[ribosomal protein uL3] + S-adenosyl-L-methionine = N(5)-methyl-L-glutaminyl-[ribosomal protein uL3] + S-adenosyl-L-homocysteine + H(+). Functionally, specifically methylates large ribosomal subunit protein uL3 on 'Gln-150'. The sequence is that of Ribosomal protein uL3 glutamine methyltransferase from Shigella dysenteriae serotype 1 (strain Sd197).